Reading from the N-terminus, the 198-residue chain is Penicillin-binding protein activator LpoB (198 aa).

An N-terminal signal peptide occupies residues Met-1–Gly-20. Cys-21 carries N-palmitoyl cysteine lipidation. Cys-21 carries the S-diacylglycerol cysteine lipid modification. The interval Pro-28–Gln-62 is disordered. Residues Pro-30–Met-61 are compositionally biased toward pro residues.

It belongs to the LpoB family. Interacts with PBP1b.

The protein resides in the cell outer membrane. In terms of biological role, regulator of peptidoglycan synthesis that is essential for the function of penicillin-binding protein 1B (PBP1b). This chain is Penicillin-binding protein activator LpoB, found in Erwinia amylovora (strain CFBP1430).